The following is a 345-amino-acid chain: Phosphoribosylformylglycinamidine cyclo-ligase (345 aa).

The protein belongs to the AIR synthase family. Homodimer.

It is found in the cytoplasm. The enzyme catalyses 2-formamido-N(1)-(5-O-phospho-beta-D-ribosyl)acetamidine + ATP = 5-amino-1-(5-phospho-beta-D-ribosyl)imidazole + ADP + phosphate + H(+). It participates in purine metabolism; IMP biosynthesis via de novo pathway; 5-amino-1-(5-phospho-D-ribosyl)imidazole from N(2)-formyl-N(1)-(5-phospho-D-ribosyl)glycinamide: step 2/2. In Escherichia coli O157:H7, this protein is Phosphoribosylformylglycinamidine cyclo-ligase.